The primary structure comprises 870 residues: Leucine--tRNA ligase (870 aa).

The 'HIGH' region motif lies at 36–46 (PYPSGKIHLGH). The 'KMSKS' region motif lies at 602-606 (KMSKS). Lys605 serves as a coordination point for ATP.

It belongs to the class-I aminoacyl-tRNA synthetase family.

The protein localises to the cytoplasm. The enzyme catalyses tRNA(Leu) + L-leucine + ATP = L-leucyl-tRNA(Leu) + AMP + diphosphate. In Rickettsia akari (strain Hartford), this protein is Leucine--tRNA ligase.